Reading from the N-terminus, the 3387-residue chain is Genome polyprotein (3387 aa).

The Cytoplasmic portion of the chain corresponds to 1–100 (MNQRKKVARP…LNILNGRKRS (100 aa)). A hydrophobic; homodimerization of capsid protein C region spans residues 36–71 (LFSGKGPLRMVLAFITFLRVLSIPPTAGILKRWGQL). Positions 100–113 (STITLLCLIPTVMA) are cleaved as a propeptide — ER anchor for the capsid protein C, removed in mature form by serine protease NS3. The chain crosses the membrane as a helical span at residues 101 to 117 (TITLLCLIPTVMAFHLS). Residues 118 to 237 (TRDGEPLMIV…GAWKHAQRVE (120 aa)) lie on the Extracellular side of the membrane. N182 carries an N-linked (GlcNAc...) asparagine; by host glycan. Residues 238–258 (SWILRNPGFALLAGFMAYMIG) form a helical membrane-spanning segment. Over 259-265 (QTGIQRT) the chain is Cytoplasmic. The chain crosses the membrane as a helical span at residues 266–279 (VFFILMMLVAPSYG). Topologically, residues 280–725 (MRCVGVGNRD…HQVFGSVYTT (446 aa)) are extracellular. Cystine bridges form between C282–C309, C339–C400, C353–C384, and C371–C395. A glycan (N-linked (GlcNAc...) asparagine; by host) is linked at N346. Residues 377-390 (DRGWGNGCGLFGKG) form a fusion peptide region. N432 carries an N-linked (GlcNAc...) asparagine; by host glycan. 2 cysteine pairs are disulfide-bonded: C464/C564 and C581/C612. A helical membrane pass occupies residues 726-746 (MFGGVSWMVRILIGLLVLWIG). Residues 747–753 (TNSRNTS) are Cytoplasmic-facing. A helical membrane pass occupies residues 754–774 (MAMSCIAVGGITLFLGFTVHA). The Extracellular segment spans residues 775 to 1194 (DMGCAVSWSG…MLGDTMSGRM (420 aa)). Cystine bridges form between C778–C789, C829–C917, C953–C997, C1054–C1103, C1065–C1087, and C1086–C1090. 2 N-linked (GlcNAc...) asparagine; by host glycosylation sites follow: N904 and N981. The chain crosses the membrane as a helical span at residues 1195-1218 (GGQIHLAIMAVFKMSPGYVLGIFL). Residues 1219–1224 (RKLTSR) lie on the Lumenal side of the membrane. Residues 1225 to 1243 (ETALMVIGMAMTTVLSIPH) traverse the membrane as a helical segment. Over 1244–1267 (DLMEFIDGISLGLILLKMVTHFDN) the chain is Cytoplasmic. A helical membrane pass occupies residues 1268 to 1288 (TQVGTLALSLTFIKSTMPLVM). Position 1289 (A1289) is a topological domain, lumenal. A helical transmembrane segment spans residues 1290 to 1308 (WRTIMAVLFVVTLIPLCRT). The Lumenal segment spans residues 1309 to 1316 (SCLQKQSH). A helical membrane pass occupies residues 1317 to 1337 (WVEITALILGAQALPVYLMTL). The Cytoplasmic portion of the chain corresponds to 1338-1345 (MKGASKRS). Residues 1346–1366 (WPLNEGIMAVGLVSLLGSALL) form a helical membrane-spanning segment. Residues 1367-1369 (KND) lie on the Lumenal side of the membrane. A helical transmembrane segment spans residues 1370–1390 (VPLAGPMVAGGLLLAAYVMSG). Residues 1391-1437 (SSADLSLEKAANVQWDEMADITGSSPIIEVKQDEDGSFSIRDVEETN) lie on the Cytoplasmic side of the membrane. An interacts with and activates NS3 protease region spans residues 1397 to 1436 (LEKAANVQWDEMADITGSSPIIEVKQDEDGSFSIRDVEET). Positions 1438 to 1458 (MITLLVKLALITVSGLYPLAI) form an intramembrane region, helical. The Cytoplasmic portion of the chain corresponds to 1459-2143 (PVTMTLWYMW…QHALNELPES (685 aa)). Residues 1475–1652 (SGALWDVPSP…ERIGEPDYEV (178 aa)) form the Peptidase S7 domain. Active-site charge relay system; for serine protease NS3 activity residues include H1525, D1549, and S1609. A Helicase ATP-binding domain is found at 1654–1810 (EDIFRKKRLT…QSNSPIEDIE (157 aa)). The important for RNA-binding stretch occupies residues 1658–1661 (RKKR). ATP is bound at residue 1667 to 1674 (LHPGAGKT). Residues 1758–1761 (DEAH) carry the DEAH box motif. The 168-residue stretch at 1820–1987 (TGFDWITDYQ…IIPTLFGPER (168 aa)) folds into the Helicase C-terminal domain. K1862 bears the N6-acetyllysine; by host mark. Residues 2144-2164 (LETLMLVALLGAMTAGIFLFF) traverse the membrane as a helical segment. At 2165-2169 (MQGKG) the chain is on the lumenal side. Positions 2170–2190 (IGKLSMGLIAIAVASGLLWVA) form an intramembrane region, helical. Residue E2191 is a topological domain, lumenal. A helical membrane pass occupies residues 2192-2212 (IQPQWIAASIILEFFLMVLLV). The Cytoplasmic portion of the chain corresponds to 2213 to 2225 (PEPEKQRTPQDNQ). A helical membrane pass occupies residues 2226–2246 (LIYVILTILTIIALVAANEMG). Residues 2247–2270 (LIEKTKTDFGFYQAKTETTILDVD) lie on the Lumenal side of the membrane. The segment at residues 2271–2291 (LRPASAWTLYAVATTILTPML) is an intramembrane region (helical). The Lumenal segment spans residues 2292-2301 (RHTIENTSAN). Residues N2297 and N2301 are each glycosylated (N-linked (GlcNAc...) asparagine; by host). Positions 2302-2322 (LSLAAIANQAAVLMGLGKGWP) form an intramembrane region, helical. The Lumenal portion of the chain corresponds to 2323 to 2343 (LHRMDLGVPLLAMGCYSQVNP). The chain crosses the membrane as a helical span at residues 2344–2364 (TTLTASLVMLLVHYAIIGPGL). Residues 2365 to 2409 (QAKATREAQKRTAAGIMKNPTVDGITVIDLEPISYDPKFEKQLGQ) are Cytoplasmic-facing. Residues 2410 to 2430 (VMLLVLCAGQLLLMRTTWAFC) traverse the membrane as a helical segment. The Lumenal segment spans residues 2431-2455 (EVLTLATGPILTLWEGNPGRFWNTT). N2453 carries N-linked (GlcNAc...) asparagine; by host glycosylation. Residues 2456–2476 (IAVSTANIFRGSYLAGAGLAF) form a helical membrane-spanning segment. Over 2477 to 3387 (SLIKNAQTPR…SAHFESEGVL (911 aa)) the chain is Cytoplasmic. The region spanning 2489–2751 (TGTTGETLGE…DADLGAGTRS (263 aa)) is the mRNA cap 0-1 NS5-type MT domain. Residue S2543 coordinates S-adenosyl-L-methionine. The residue at position 2543 (S2543) is a Phosphoserine. K2548 (for 2'-O-MTase activity) is an active-site residue. Positions 2564 to 2567 (VVDL) match the SUMO-interacting motif motif. Positions 2573, 2574, 2591, 2592, 2618, and 2619 each coordinate S-adenosyl-L-methionine. The For 2'-O-MTase activity role is filled by D2633. Residue I2634 participates in S-adenosyl-L-methionine binding. Catalysis depends on for 2'-O-MTase activity residues K2668 and E2704. An S-adenosyl-L-methionine-binding site is contributed by Y2706. Residues E2925, H2929, C2934, and C2937 each contribute to the Zn(2+) site. Residues 3016 to 3166 (LIYADDTAGW…PLDERFSTSL (151 aa)) form the RdRp catalytic domain. 3 residues coordinate Zn(2+): H3200, C3216, and C3335.

It in the N-terminal section; belongs to the class I-like SAM-binding methyltransferase superfamily. mRNA cap 0-1 NS5-type methyltransferase family. In terms of assembly, homodimer. Interacts (via N-terminus) with host EXOC1 (via C-terminus); this interaction results in EXOC1 degradation through the proteasome degradation pathway. As to quaternary structure, forms heterodimers with envelope protein E in the endoplasmic reticulum and Golgi. Homodimer; in the endoplasmic reticulum and Golgi. Interacts with protein prM. Interacts with non-structural protein 1. In terms of assembly, homodimer; Homohexamer when secreted. Interacts with envelope protein E. As to quaternary structure, interacts (via N-terminus) with serine protease NS3. Forms a heterodimer with serine protease NS3. May form homooligomers. In terms of assembly, forms a heterodimer with NS2B. Interacts with NS4B. Interacts with unphosphorylated RNA-directed RNA polymerase NS5; this interaction stimulates RNA-directed RNA polymerase NS5 guanylyltransferase activity. Interacts with host SHFL. As to quaternary structure, interacts with host MAVS; this interaction inhibits the synthesis of IFN-beta. Interacts with host SHFL. Interacts with host AUP1; the interaction occurs in the presence of Dengue virus NS4B and induces lipophagy which facilitates production of virus progeny particles. Interacts with serine protease NS3. In terms of assembly, homodimer. Interacts with host STAT2; this interaction inhibits the phosphorylation of the latter, and, when all viral proteins are present (polyprotein), targets STAT2 for degradation. Interacts with serine protease NS3. Interacts with host PAF1 complex; the interaction may prevent the recruitment of the PAF1 complex to interferon-responsive genes, and thus reduces the immune response. Post-translationally, specific enzymatic cleavages in vivo yield mature proteins. Cleavages in the lumen of endoplasmic reticulum are performed by host signal peptidase, whereas cleavages in the cytoplasmic side are performed by serine protease NS3. Signal cleavage at the 2K-4B site requires a prior NS3 protease-mediated cleavage at the 4A-2K site. Cleaved in post-Golgi vesicles by a host furin, releasing the mature small envelope protein M, and peptide pr. This cleavage is incomplete as up to 30% of viral particles still carry uncleaved prM. In terms of processing, N-glycosylated. Post-translationally, N-glycosylated. The excreted form is glycosylated and this is required for efficient secretion of the protein from infected cells. Acetylated by host KAT5. Acetylation modulates NS3 RNA-binding and unwinding activities and plays an important positive role for viral replication. In terms of processing, sumoylation of RNA-directed RNA polymerase NS5 increases NS5 protein stability allowing proper viral RNA replication. Post-translationally, phosphorylated on serines residues. This phosphorylation may trigger NS5 nuclear localization.

The protein localises to the virion. The protein resides in the host nucleus. Its subcellular location is the host cytoplasm. It localises to the host perinuclear region. It is found in the secreted. The protein localises to the virion membrane. The protein resides in the host endoplasmic reticulum membrane. Its subcellular location is the host mitochondrion. The enzyme catalyses Selective hydrolysis of -Xaa-Xaa-|-Yaa- bonds in which each of the Xaa can be either Arg or Lys and Yaa can be either Ser or Ala.. The catalysed reaction is RNA(n) + a ribonucleoside 5'-triphosphate = RNA(n+1) + diphosphate. It carries out the reaction a ribonucleoside 5'-triphosphate + H2O = a ribonucleoside 5'-diphosphate + phosphate + H(+). It catalyses the reaction ATP + H2O = ADP + phosphate + H(+). The enzyme catalyses a 5'-end (5'-triphosphoguanosine)-ribonucleoside in mRNA + S-adenosyl-L-methionine = a 5'-end (N(7)-methyl 5'-triphosphoguanosine)-ribonucleoside in mRNA + S-adenosyl-L-homocysteine. The catalysed reaction is a 5'-end (N(7)-methyl 5'-triphosphoguanosine)-ribonucleoside in mRNA + S-adenosyl-L-methionine = a 5'-end (N(7)-methyl 5'-triphosphoguanosine)-(2'-O-methyl-ribonucleoside) in mRNA + S-adenosyl-L-homocysteine + H(+). Plays a role in virus budding by binding to the cell membrane and gathering the viral RNA into a nucleocapsid that forms the core of a mature virus particle. During virus entry, may induce genome penetration into the host cytoplasm after hemifusion induced by the surface proteins. Can migrate to the cell nucleus where it modulates host functions. Overcomes the anti-viral effects of host EXOC1 by sequestering and degrading the latter through the proteasome degradation pathway. Its function is as follows. Inhibits RNA silencing by interfering with host Dicer. In terms of biological role, prevents premature fusion activity of envelope proteins in trans-Golgi by binding to envelope protein E at pH6.0. After virion release in extracellular space, gets dissociated from E dimers. Functionally, acts as a chaperone for envelope protein E during intracellular virion assembly by masking and inactivating envelope protein E fusion peptide. prM is the only viral peptide matured by host furin in the trans-Golgi network probably to avoid catastrophic activation of the viral fusion activity in acidic Golgi compartment prior to virion release. prM-E cleavage is inefficient, and many virions are only partially matured. These uncleaved prM would play a role in immune evasion. May play a role in virus budding. Exerts cytotoxic effects by activating a mitochondrial apoptotic pathway through M ectodomain. May display a viroporin activity. Its function is as follows. Binds to host cell surface receptor and mediates fusion between viral and cellular membranes. Envelope protein is synthesized in the endoplasmic reticulum in the form of heterodimer with protein prM. They play a role in virion budding in the ER, and the newly formed immature particle is covered with 60 spikes composed of heterodimer between precursor prM and envelope protein E. The virion is transported to the Golgi apparatus where the low pH causes dissociation of PrM-E heterodimers and formation of E homodimers. prM-E cleavage is inefficient, and many virions are only partially matured. These uncleaved prM would play a role in immune evasion. In terms of biological role, involved in immune evasion, pathogenesis and viral replication. Once cleaved off the polyprotein, is targeted to three destinations: the viral replication cycle, the plasma membrane and the extracellular compartment. Essential for viral replication. Required for formation of the replication complex and recruitment of other non-structural proteins to the ER-derived membrane structures. Excreted as a hexameric lipoparticle that plays a role against host immune response. Antagonizing the complement function. Binds to the host macrophages and dendritic cells. Inhibits signal transduction originating from Toll-like receptor 3 (TLR3). Functionally, disrupts the host endothelial glycocalyx layer of host pulmonary microvascular endothelial cells, inducing degradation of sialic acid and shedding of heparan sulfate proteoglycans. NS1 induces expression of sialidases, heparanase, and activates cathepsin L, which activates heparanase via enzymatic cleavage. These effects are probably linked to the endothelial hyperpermeability observed in severe dengue disease. Component of the viral RNA replication complex that functions in virion assembly and antagonizes the host immune response. Its function is as follows. Required cofactor for the serine protease function of NS3. May have membrane-destabilizing activity and form viroporins. In terms of biological role, displays three enzymatic activities: serine protease, NTPase and RNA helicase. NS3 serine protease, in association with NS2B, performs its autocleavage and cleaves the polyprotein at dibasic sites in the cytoplasm: C-prM, NS2A-NS2B, NS2B-NS3, NS3-NS4A, NS4A-2K and NS4B-NS5. NS3 RNA helicase binds RNA and unwinds dsRNA in the 3' to 5' direction. Functionally, regulates the ATPase activity of the NS3 helicase activity. NS4A allows NS3 helicase to conserve energy during unwinding. Plays a role in the inhibition of the host innate immune response. Interacts with host MAVS and thereby prevents the interaction between RIGI and MAVS. In turn, IFN-beta production is impaired. Interacts with host AUP1 which mediates induction of lipophagy in host cells and facilitates production of virus progeny particles. Functions as a signal peptide for NS4B and is required for the interferon antagonism activity of the latter. Its function is as follows. Induces the formation of ER-derived membrane vesicles where the viral replication takes place. Inhibits interferon (IFN)-induced host STAT1 phosphorylation and nuclear translocation, thereby preventing the establishment of cellular antiviral state by blocking the IFN-alpha/beta pathway. In terms of biological role, replicates the viral (+) and (-) RNA genome, and performs the capping of genomes in the cytoplasm. NS5 methylates viral RNA cap at guanine N-7 and ribose 2'-O positions. Besides its role in RNA genome replication, also prevents the establishment of cellular antiviral state by blocking the interferon-alpha/beta (IFN-alpha/beta) signaling pathway. Inhibits host TYK2 and STAT2 phosphorylation, thereby preventing activation of JAK-STAT signaling pathway. May reduce immune responses by preventing the recruitment of the host PAF1 complex to interferon-responsive genes. This chain is Genome polyprotein, found in Dengue virus type 4 (strain Thailand/0348/1991) (DENV-4).